The sequence spans 775 residues: Endothelin-converting enzyme-like 1 (775 aa).

Topologically, residues 1 to 61 are cytoplasmic; that stretch reads MEAPYSMTAH…LPRWNRREVC (61 aa). The segment at 23–51 is disordered; sequence CGTGGARGTSLPPGFPRSSGRSASGARSG. Residues 32–51 are compositionally biased toward low complexity; the sequence is SLPPGFPRSSGRSASGARSG. Residues 62–82 traverse the membrane as a helical; Signal-anchor for type II membrane protein segment; it reads LLSGLVFAAGLCAILAAMLAL. The Lumenal portion of the chain corresponds to 83–775; that stretch reads KYLGPGAAGT…MNPVHKCSVW (693 aa). In terms of domain architecture, Peptidase M13 spans 99 to 775; the sequence is GCPERKAFAR…MNPVHKCSVW (677 aa). 4 disulfides stabilise this stretch: Cys-124–Cys-760, Cys-132–Cys-720, Cys-188–Cys-441, and Cys-649–Cys-772. N-linked (GlcNAc...) asparagine glycosylation is found at Asn-255 and Asn-322. Residue His-612 coordinates Zn(2+). Glu-613 is a catalytic residue. His-616 serves as a coordination point for Zn(2+). Asn-656 carries N-linked (GlcNAc...) asparagine glycosylation. Glu-672 lines the Zn(2+) pocket. Residue Asp-676 is the Proton donor of the active site.

This sequence belongs to the peptidase M13 family. Requires Zn(2+) as cofactor. Highly expressed in the CNS, in particular in neurons of the caudate putamen, diagonal band, the paraventricular nucleus of the thalamus, part of the hypothalamus, in cranial motor nuclei, inferior olive, and substantia gelatinosa of the spinal tract trigeminal nucleus. Not detected in cerebral cortex, hippocampus and cerebellum.

It localises to the membrane. Functionally, may contribute to the degradation of peptide hormones and be involved in the inactivation of neuronal peptides. Cleaves the synthetic substrate Z-Gly-Gly-Leu-pNA and releases pNA. May protect against C2-ceramide-induced apoptosis. The polypeptide is Endothelin-converting enzyme-like 1 (Ecel1) (Rattus norvegicus (Rat)).